We begin with the raw amino-acid sequence, 388 residues long: Basigin (388 aa).

An N-terminal signal peptide occupies residues 1–22; the sequence is MAAALLLALAFTFLSGQGACAA. The Extracellular segment spans residues 23–326; the sequence is AGFLKAPMSQ…ISLRVRSRLA (304 aa). The Ig-like domain occupies 37–120; sequence GGSVVLHCEA…SSDPDRNHLT (84 aa). 3 cysteine pairs are disulfide-bonded: C44–C108, C157–C203, and C242–C304. Positions 138-219 constitute an Ig-like C2-type domain; sequence EPGTIVTSVQ…VGRGNINVEG (82 aa). 3 N-linked (GlcNAc...) asparagine glycosylation sites follow: N160, N269, and N305. Residues 221-320 form the Ig-like V-type domain; the sequence is PRIKVGKKSE…GSARETISLR (100 aa). The chain crosses the membrane as a helical span at residues 327-347; it reads ALWPFLGIVAEVLVLVTIIFI. Topologically, residues 348–388 are cytoplasmic; it reads YEKRRKPDQTLDEDDPGAAPLKGSGSHLNDKDKNVRQRNAT. The tract at residues 355–388 is disordered; sequence DQTLDEDDPGAAPLKGSGSHLNDKDKNVRQRNAT. T357 carries the post-translational modification Phosphothreonine. Residue S371 is modified to Phosphoserine.

Homooligomer. Interacts with NXNL1, SLC2A1 and SLC16A1/GLUT1. Interacts with XKR8; promoting its localization at the cell membrane. In terms of assembly, homooligomer. Interacts with SLC16A1; interaction mediates SLC16A1 targeting to the plasma membrane. Interacts with SLC16A3; interaction mediates SLC16A3 targeting to the plasma membrane. Interacts with VEGFA, KDR/VEGFR2, PPIA/CYPA, SLC16A12, SLC16A11, ATP1B2, MAG, L1CAM and AJAP1. Interacts with PPIL2; regulates BSG transport to the cell membrane. As to quaternary structure, interacts with SLC16A6; this interaction mediates targeting to the plasma membrane. In terms of tissue distribution, expressed in the skeletal muscle, liver, small intestine, kidney, testis, brain, heart and spleen. Also present in various immature cells and endothelia.

It is found in the cell membrane. The protein resides in the photoreceptor inner segment. The protein localises to the cell projection. It localises to the cilium. Its subcellular location is the photoreceptor outer segment. It is found in the endoplasmic reticulum membrane. The protein resides in the basolateral cell membrane. Functionally, essential for normal retinal maturation and development. Acts as a retinal cell surface receptor for NXNL1 and plays an important role in NXNL1-mediated survival of retinal cone photoreceptors. In association with glucose transporter SLC16A1/GLUT1 and NXNL1, promotes retinal cone survival by enhancing aerobic glycolysis and accelerating the entry of glucose into photoreceptors. Its function is as follows. Signaling receptor for cyclophilins, essential for PPIA/CYPA and PPIB/CYPB-dependent signaling related to chemotaxis and adhesion of immune cells. Plays an important role in targeting the monocarboxylate transporters SLC16A1/GLUT1 and SLC16A3 to the plasma membrane. Acts as a coreceptor for vascular endothelial growth factor receptor 2 (KDR/VEGFR2) in endothelial cells enhancing its VEGFA-mediated activation and downstream signaling. Promotes angiogenesis through EPAS1/HIF2A-mediated up-regulation of VEGFA and KDR/VEGFR2 in endothelial cells. Plays an important role in spermatogenesis; mediates interactions between germ cells and Sertoli cell and is essential for the development/differentiation of germ cells to round spermatids. This Rattus norvegicus (Rat) protein is Basigin (Bsg).